Here is a 163-residue protein sequence, read N- to C-terminus: 3-hydroxyacyl-[acyl-carrier-protein] dehydratase FabZ (163 aa).

His-61 is an active-site residue.

Belongs to the thioester dehydratase family. FabZ subfamily.

The protein resides in the cytoplasm. The enzyme catalyses a (3R)-hydroxyacyl-[ACP] = a (2E)-enoyl-[ACP] + H2O. Functionally, involved in unsaturated fatty acids biosynthesis. Catalyzes the dehydration of short chain beta-hydroxyacyl-ACPs and long chain saturated and unsaturated beta-hydroxyacyl-ACPs. The polypeptide is 3-hydroxyacyl-[acyl-carrier-protein] dehydratase FabZ (Dinoroseobacter shibae (strain DSM 16493 / NCIMB 14021 / DFL 12)).